The primary structure comprises 29 residues: Lambda-theraphotoxin-Ec2b (29 aa).

Disulfide bonds link cysteine 2–cysteine 16, cysteine 9–cysteine 21, and cysteine 15–cysteine 25.

Belongs to the neurotoxin 30 (phrixotoxin) family. In terms of tissue distribution, expressed by the venom gland.

Its subcellular location is the secreted. Its function is as follows. Insect-selective neurotoxin that potently blocks insect calcium-activated potassium (BKCa) channels (Slo-type) in cockroach dorsal unpaired median (DUM) neurons (IC(50)=25.3 nM). This occurs in the absence of any shifts in the voltage dependence of activation. May interact with the turret and/or loop region of the external entrance to the channel and does not project deeply into the pore of the channel. In vivo, does not show toxicity in mice after intracerebroventricular injection of up to 25 pmol/g (1.8 ug/20 g mouse). In Eucratoscelus constrictus (African red-rump baboon spider), this protein is Lambda-theraphotoxin-Ec2b.